Here is a 319-residue protein sequence, read N- to C-terminus: Ornithine carbamoyltransferase (319 aa).

Residues 63-66 (STRT), glutamine 90, arginine 114, and 141-144 (HPCQ) contribute to the carbamoyl phosphate site. L-ornithine is bound by residues asparagine 172, aspartate 236, and 240–241 (SM). Residues 276 to 277 (CL) and arginine 304 contribute to the carbamoyl phosphate site.

The protein belongs to the aspartate/ornithine carbamoyltransferase superfamily. OTCase family.

The protein resides in the cytoplasm. The enzyme catalyses carbamoyl phosphate + L-ornithine = L-citrulline + phosphate + H(+). The protein operates within amino-acid biosynthesis; L-arginine biosynthesis; L-arginine from L-ornithine and carbamoyl phosphate: step 1/3. Functionally, reversibly catalyzes the transfer of the carbamoyl group from carbamoyl phosphate (CP) to the N(epsilon) atom of ornithine (ORN) to produce L-citrulline. The chain is Ornithine carbamoyltransferase from Halalkalibacterium halodurans (strain ATCC BAA-125 / DSM 18197 / FERM 7344 / JCM 9153 / C-125) (Bacillus halodurans).